The primary structure comprises 334 residues: Phosphate acyltransferase (334 aa).

This sequence belongs to the PlsX family. As to quaternary structure, homodimer. Probably interacts with PlsY.

It localises to the cytoplasm. The catalysed reaction is a fatty acyl-[ACP] + phosphate = an acyl phosphate + holo-[ACP]. Its pathway is lipid metabolism; phospholipid metabolism. Its function is as follows. Catalyzes the reversible formation of acyl-phosphate (acyl-PO(4)) from acyl-[acyl-carrier-protein] (acyl-ACP). This enzyme utilizes acyl-ACP as fatty acyl donor, but not acyl-CoA. This Clostridium tetani (strain Massachusetts / E88) protein is Phosphate acyltransferase.